We begin with the raw amino-acid sequence, 224 residues long: 7-cyano-7-deazaguanine synthase (224 aa).

7-17 (LSGGLDSSTIL) provides a ligand contact to ATP. Zn(2+)-binding residues include Cys-191, Cys-199, Cys-202, and Cys-205.

This sequence belongs to the QueC family. Requires Zn(2+) as cofactor.

It catalyses the reaction 7-carboxy-7-deazaguanine + NH4(+) + ATP = 7-cyano-7-deazaguanine + ADP + phosphate + H2O + H(+). The protein operates within purine metabolism; 7-cyano-7-deazaguanine biosynthesis. Catalyzes the ATP-dependent conversion of 7-carboxy-7-deazaguanine (CDG) to 7-cyano-7-deazaguanine (preQ(0)). This Nostoc punctiforme (strain ATCC 29133 / PCC 73102) protein is 7-cyano-7-deazaguanine synthase.